Here is a 132-residue protein sequence, read N- to C-terminus: Large ribosomal subunit protein uL14 (132 aa).

It belongs to the universal ribosomal protein uL14 family. The L3/L14/L24e cluster may contact the 16S rRNA in 2 intersubunit bridges. Part of the 50S ribosomal subunit. Forms a cluster with proteins L3 and L24e.

Its function is as follows. Forms part of two intersubunit bridges in the 70S ribosome. Binds to 23S rRNA. The polypeptide is Large ribosomal subunit protein uL14 (Haloarcula marismortui (strain ATCC 43049 / DSM 3752 / JCM 8966 / VKM B-1809) (Halobacterium marismortui)).